The following is a 130-amino-acid chain: Small ribosomal subunit protein uS11c (130 aa).

Belongs to the universal ribosomal protein uS11 family. Part of the 30S ribosomal subunit.

The protein localises to the plastid. It is found in the chloroplast. This Tetradesmus obliquus (Green alga) protein is Small ribosomal subunit protein uS11c.